We begin with the raw amino-acid sequence, 143 residues long: Nucleoside diphosphate kinase (143 aa).

The ATP site is built by Lys-11, Phe-59, Arg-87, Thr-93, Arg-104, and Asn-114. The active-site Pros-phosphohistidine intermediate is His-117.

Belongs to the NDK family. As to quaternary structure, homotetramer. It depends on Mg(2+) as a cofactor.

It localises to the cytoplasm. The enzyme catalyses a 2'-deoxyribonucleoside 5'-diphosphate + ATP = a 2'-deoxyribonucleoside 5'-triphosphate + ADP. It catalyses the reaction a ribonucleoside 5'-diphosphate + ATP = a ribonucleoside 5'-triphosphate + ADP. Functionally, major role in the synthesis of nucleoside triphosphates other than ATP. The ATP gamma phosphate is transferred to the NDP beta phosphate via a ping-pong mechanism, using a phosphorylated active-site intermediate. The sequence is that of Nucleoside diphosphate kinase from Edwardsiella ictaluri (strain 93-146).